A 199-amino-acid chain; its full sequence is Putative pseudouridine methyltransferase (199 aa).

Positions 132 and 186 each coordinate S-adenosyl-L-methionine.

Belongs to the methyltransferase superfamily. TrmY family.

The protein resides in the cytoplasm. This is Putative pseudouridine methyltransferase from Vibrio atlanticus (strain LGP32) (Vibrio splendidus (strain Mel32)).